The following is a 729-amino-acid chain: Fatty acid oxidation complex subunit alpha (729 aa).

Residues M1–A189 are enoyl-CoA hydratase/isomerase. D296 serves as a coordination point for substrate. A 3-hydroxyacyl-CoA dehydrogenase region spans residues E311–A729. NAD(+) is bound by residues M324, D343, V400–E402, K407, and S429. The active-site For 3-hydroxyacyl-CoA dehydrogenase activity is H450. N453 serves as a coordination point for NAD(+). Substrate is bound by residues N500 and Y660.

The protein in the N-terminal section; belongs to the enoyl-CoA hydratase/isomerase family. This sequence in the C-terminal section; belongs to the 3-hydroxyacyl-CoA dehydrogenase family. Heterotetramer of two alpha chains (FadB) and two beta chains (FadA).

The catalysed reaction is a (3S)-3-hydroxyacyl-CoA + NAD(+) = a 3-oxoacyl-CoA + NADH + H(+). It carries out the reaction a (3S)-3-hydroxyacyl-CoA = a (2E)-enoyl-CoA + H2O. It catalyses the reaction a 4-saturated-(3S)-3-hydroxyacyl-CoA = a (3E)-enoyl-CoA + H2O. The enzyme catalyses (3S)-3-hydroxybutanoyl-CoA = (3R)-3-hydroxybutanoyl-CoA. The catalysed reaction is a (3Z)-enoyl-CoA = a 4-saturated (2E)-enoyl-CoA. It carries out the reaction a (3E)-enoyl-CoA = a 4-saturated (2E)-enoyl-CoA. Its pathway is lipid metabolism; fatty acid beta-oxidation. Functionally, involved in the aerobic and anaerobic degradation of long-chain fatty acids via beta-oxidation cycle. Catalyzes the formation of 3-oxoacyl-CoA from enoyl-CoA via L-3-hydroxyacyl-CoA. It can also use D-3-hydroxyacyl-CoA and cis-3-enoyl-CoA as substrate. The polypeptide is Fatty acid oxidation complex subunit alpha (Klebsiella pneumoniae (strain 342)).